Reading from the N-terminus, the 1316-residue chain is DNA-directed RNA polymerase subunit beta' (1316 aa).

4 residues coordinate Zn(2+): cysteine 60, cysteine 62, cysteine 75, and cysteine 78. Residues aspartate 535, aspartate 537, and aspartate 539 each coordinate Mg(2+). Zn(2+) contacts are provided by cysteine 891, cysteine 968, cysteine 975, and cysteine 978.

Belongs to the RNA polymerase beta' chain family. As to quaternary structure, the RNAP catalytic core consists of 2 alpha, 1 beta, 1 beta' and 1 omega subunit. When a sigma factor is associated with the core the holoenzyme is formed, which can initiate transcription. Mg(2+) is required as a cofactor. The cofactor is Zn(2+).

The enzyme catalyses RNA(n) + a ribonucleoside 5'-triphosphate = RNA(n+1) + diphosphate. DNA-dependent RNA polymerase catalyzes the transcription of DNA into RNA using the four ribonucleoside triphosphates as substrates. This Mycobacterium avium (strain 104) protein is DNA-directed RNA polymerase subunit beta'.